We begin with the raw amino-acid sequence, 116 residues long: Cystatin (116 aa).

The Secondary area of contact motif lies at 53–57; sequence QLVSG. Cystine bridges form between cysteine 71/cysteine 81 and cysteine 95/cysteine 115. Position 80 is a phosphoserine (serine 80).

It belongs to the cystatin family.

The protein localises to the secreted. This protein binds tightly to and inhibits papain and cathepsin B. In Coturnix japonica (Japanese quail), this protein is Cystatin.